A 195-amino-acid chain; its full sequence is Probable WRKY transcription factor 56 (195 aa).

Polar residues predominate over residues 1-10; that stretch reads MEGVDNTNPM. Disordered stretches follow at residues 1-20 and 70-93; these read MEGVDNTNPMLTLEEGENNN and EMGGLVSNNSNNSDHNKNCNKGKG. A DNA-binding region (WRKY) is located at residues 108–173; sequence SDDDVLDDGY…YEGVHNHPCE (66 aa).

The protein belongs to the WRKY group II-c family.

It localises to the nucleus. In terms of biological role, transcription factor. Interacts specifically with the W box (5'-(T)TGAC[CT]-3'), a frequently occurring elicitor-responsive cis-acting element. The protein is Probable WRKY transcription factor 56 (WRKY56) of Arabidopsis thaliana (Mouse-ear cress).